A 219-amino-acid polypeptide reads, in one-letter code: Elongation factor Ts (219 aa).

Residues threonine 82–valine 85 form an involved in Mg(2+) ion dislocation from EF-Tu region.

The protein belongs to the EF-Ts family.

The protein resides in the cytoplasm. In terms of biological role, associates with the EF-Tu.GDP complex and induces the exchange of GDP to GTP. It remains bound to the aminoacyl-tRNA.EF-Tu.GTP complex up to the GTP hydrolysis stage on the ribosome. The sequence is that of Elongation factor Ts from Gloeobacter violaceus (strain ATCC 29082 / PCC 7421).